We begin with the raw amino-acid sequence, 211 residues long: Uracil phosphoribosyltransferase (211 aa).

Residues arginine 78, arginine 103, and 130–138 each bind 5-phospho-alpha-D-ribose 1-diphosphate; that span reads DPMLATGGT. Uracil-binding positions include isoleucine 195 and 200–202; that span reads GDA. Aspartate 201 contacts 5-phospho-alpha-D-ribose 1-diphosphate.

The protein belongs to the UPRTase family. Requires Mg(2+) as cofactor.

The enzyme catalyses UMP + diphosphate = 5-phospho-alpha-D-ribose 1-diphosphate + uracil. It functions in the pathway pyrimidine metabolism; UMP biosynthesis via salvage pathway; UMP from uracil: step 1/1. Its activity is regulated as follows. Allosterically activated by GTP. Functionally, catalyzes the conversion of uracil and 5-phospho-alpha-D-ribose 1-diphosphate (PRPP) to UMP and diphosphate. This Paenarthrobacter aurescens (strain TC1) protein is Uracil phosphoribosyltransferase.